The chain runs to 290 residues: MYFQDIISNLNNFWSEKGCLLLQPYDLEKGAGTMSPHSFLRAIGPEPWAVAYPEPCRRPTDGRYGDNPNRAQHYFQYQVLIKPSLDGIQEIYLSSLEALGISAKEHDIRFVEDNWESPTLGAWGVGWEVWLDGMEVTQFTYFQQCGGLDCKPVSIEITYGLERLAMYLQNVESIWDLSWNKKTKYGDIWLPFEKGQCKYNFEESNSENLRKLFEIYEEEAHQLIAKKLPAPCLDYVLKCSHTFNLLEARGVISVTERTKIIARIRSLARKVAEAWLEERGTLGFPLCAEN.

It belongs to the class-II aminoacyl-tRNA synthetase family. In terms of assembly, tetramer of two alpha and two beta subunits.

It is found in the cytoplasm. The catalysed reaction is tRNA(Gly) + glycine + ATP = glycyl-tRNA(Gly) + AMP + diphosphate. This chain is Glycine--tRNA ligase alpha subunit, found in Prochlorococcus marinus (strain NATL1A).